A 136-amino-acid polypeptide reads, in one-letter code: Large ribosomal subunit protein uL16 (136 aa).

The protein belongs to the universal ribosomal protein uL16 family. Part of the 50S ribosomal subunit.

Binds 23S rRNA and is also seen to make contacts with the A and possibly P site tRNAs. This chain is Large ribosomal subunit protein uL16, found in Ehrlichia chaffeensis (strain ATCC CRL-10679 / Arkansas).